Consider the following 434-residue polypeptide: N-acylneuraminate cytidylyltransferase (434 aa).

Methionine 1 carries the N-acetylmethionine modification. The disordered stretch occupies residues 1-42; it reads MDSVEKGAATSVSNPRGRPSRGRPPKLQRNSRGGQGRGVEKP. The short motif at 15 to 31 is the BC1 motif element; it reads PRGRPSRGRPPKLQRNS. Omega-N-methylarginine is present on residues arginine 37 and arginine 52. Residues arginine 52, asparagine 62, arginine 111, serine 120, serine 122, and glutamine 143 each coordinate substrate. The short motif at 200–206 is the BC2 motif element; that stretch reads KRPRRQD. Arginine 201 is a catalytic residue. The BC3 motif motif lies at 269 to 276; it reads KEKLKEIK.

Belongs to the CMP-NeuNAc synthase family. In terms of assembly, homotetramer; the active enzyme is formed by a dimer of dimers. In terms of tissue distribution, ubiquitously expressed. Expressed in pancreas, kidney, liver, skeletal muscle, lung, placenta, brain, heart, colon, PBL, small intestine, ovary, testis, prostate, thymus and spleen.

It is found in the nucleus. It catalyses the reaction an N-acylneuraminate + CTP = a CMP-N-acyl-beta-neuraminate + diphosphate. It functions in the pathway amino-sugar metabolism; N-acetylneuraminate metabolism. Functionally, catalyzes the activation of N-acetylneuraminic acid (NeuNAc) to cytidine 5'-monophosphate N-acetylneuraminic acid (CMP-NeuNAc), a substrate required for the addition of sialic acid. Has some activity toward NeuNAc, N-glycolylneuraminic acid (Neu5Gc) or 2-keto-3-deoxy-D-glycero-D-galacto-nononic acid (KDN). In Homo sapiens (Human), this protein is N-acylneuraminate cytidylyltransferase (CMAS).